The sequence spans 114 residues: Cell cycle protein GpsB (114 aa).

Residues 42-77 (YQKMADMNNEVVKLSEENHKLKKELEELRLRVATSR) are a coiled coil. The tract at residues 74–99 (ATSRPQDNKSFSSNNTTTNTSSNNVD) is disordered. Residues 85 to 97 (SSNNTTTNTSSNN) are compositionally biased toward low complexity.

The protein belongs to the GpsB family. As to quaternary structure, forms polymers through the coiled coil domains. Interacts with PBP1, MreC and EzrA.

It is found in the cytoplasm. Divisome component that associates with the complex late in its assembly, after the Z-ring is formed, and is dependent on DivIC and PBP2B for its recruitment to the divisome. Together with EzrA, is a key component of the system that regulates PBP1 localization during cell cycle progression. Its main role could be the removal of PBP1 from the cell pole after pole maturation is completed. Also contributes to the recruitment of PBP1 to the division complex. Not essential for septum formation. In Staphylococcus aureus (strain Mu3 / ATCC 700698), this protein is Cell cycle protein GpsB.